Consider the following 623-residue polypeptide: V-type proton ATPase catalytic subunit A (623 aa).

252-259 (GAFGCGKT) contacts ATP.

Belongs to the ATPase alpha/beta chains family. V-ATPase is a heteromultimeric enzyme composed of a peripheral catalytic V1 complex (main components: subunits A, B, C, D, E, and F) attached to an integral membrane V0 proton pore complex (main component: the proteolipid protein).

It carries out the reaction ATP + H2O + 4 H(+)(in) = ADP + phosphate + 5 H(+)(out). Catalytic subunit of the peripheral V1 complex of vacuolar ATPase. V-ATPase vacuolar ATPase is responsible for acidifying a variety of intracellular compartments in eukaryotic cells. This Brassica napus (Rape) protein is V-type proton ATPase catalytic subunit A.